The chain runs to 243 residues: Terpene cyclase ptmB (243 aa).

Helical transmembrane passes span 19–39 (IANL…VGMI), 48–68 (YGMA…YSLI), and 78–98 (GVFI…IKFA). N-linked (GlcNAc...) asparagine glycosylation occurs at N111. 4 helical membrane-spanning segments follow: residues 112–132 (LSLI…ALAA), 137–157 (SLAY…GGLC), 172–194 (LWLS…WMYW), and 205–225 (LVLW…ICYW).

This sequence belongs to the paxB family.

The protein localises to the membrane. Its pathway is secondary metabolite biosynthesis. Terpene cyclase; part of the gene cluster that mediates the biosynthesis of the indole diterpenes penitrems. The geranylgeranyl diphosphate (GGPP) synthase ptmG catalyzes the first step in penitrem biosynthesis via conversion of farnesyl pyrophosphate and isopentyl pyrophosphate into geranylgeranyl pyrophosphate (GGPP). Condensation of indole-3-glycerol phosphate with GGPP by the prenyl transferase ptmC then forms 3-geranylgeranylindole (3-GGI). Epoxidation by the FAD-dependent monooxygenase ptmM leads to a epoxidized-GGI that is substrate of the terpene cyclase ptmB for cyclization to yield paspaline. Paspaline is subsequently converted to 13-desoxypaxilline by the cytochrome P450 monooxygenase ptmP, the latter being then converted to paxilline by the cytochrome P450 monooxygenase ptmQ. Paxilline is converted to beta-paxitriol via C-10 ketoreduction by the short-chain dehydrogenase ptmH which can be monoprenylated at the C-20 by the indole diterpene prenyltransferase ptmD. A two-step elimination (acetylation and elimination) process performed by the O-acetyltransferase ptmV and ptmI leads to the production of the prenylated form of penijanthine. The FAD-linked oxidoreductase ptmO then converts the prenylated form of penijanthine into PC-M5 which is in turn transformed into PC-M4 by the aromatic dimethylallyltransferase ptmE. Five sequential oxidative transformations performed by the cytochrome P450 monooxygenases ptmK, ptmU, ptmL, ptmN and ptmJ yield the various penitrem compounds. PtmK, ptmU and ptmM are involved in the formation of the key bicyclic ring of penitrem C via the formation of the intermediates secopenitrem D and penitrem D. PtmL catalyzes the epoxidation of penitrem D and C to yield penitrem B and F, respectively. PtmJ catalyzes the last benzylic hydroxylation to convert penitrem B to prenitrem E and penitrem F to penitrem A. The chain is Terpene cyclase ptmB from Penicillium ochrochloron.